A 461-amino-acid polypeptide reads, in one-letter code: Ornithine decarboxylase (461 aa).

Position 69 is an N6-(pyridoxal phosphate)lysine (Lys-69). Residues Ser-200, Gly-237, and 274 to 277 (EPGR) each bind pyridoxal 5'-phosphate. Phosphoserine; by CK2 is present on Ser-303. 331-332 (YD) contributes to the substrate binding site. Residue Cys-360 is the Proton donor; shared with dimeric partner of the active site. The residue at position 360 (Cys-360) is an S-nitrosocysteine; in inhibited form. Asp-361 provides a ligand contact to substrate. Tyr-389 contacts pyridoxal 5'-phosphate.

The protein belongs to the Orn/Lys/Arg decarboxylase class-II family. In terms of assembly, homodimer. Only the dimer is catalytically active, as the active sites are constructed of residues from both monomers. Does not form a heterodimer with AZIN2. Pyridoxal 5'-phosphate serves as cofactor. In terms of processing, S-Nitrosylation inhibits the enzyme. S-Nitrosylated in vitro on 4 cysteine residues.

The catalysed reaction is L-ornithine + H(+) = putrescine + CO2. Its pathway is amine and polyamine biosynthesis; putrescine biosynthesis via L-ornithine pathway; putrescine from L-ornithine: step 1/1. Its activity is regulated as follows. Inhibited by S-nitrosylation. Inhibited by antizymes (AZs) OAZ1, OAZ2 and OAZ3 in response to polyamine levels. AZs inhibit the assembly of the functional homodimer by binding to ODC monomers. Additionally, OAZ1 targets ODC monomers for ubiquitin-independent proteolytic destruction by the 26S proteasome. Inhibited by 1-amino-oxy-3-aminopropane (APA, an isosteric analog of putrescine). Irreversibly inhibited by alpha-difluoromethylornithine (DFMO). Its function is as follows. Catalyzes the first and rate-limiting step of polyamine biosynthesis that converts ornithine into putrescine, which is the precursor for the polyamines, spermidine and spermine. Polyamines are essential for cell proliferation and are implicated in cellular processes, ranging from DNA replication to apoptosis. In Homo sapiens (Human), this protein is Ornithine decarboxylase (ODC1).